The following is a 113-amino-acid chain: Colicin-E1 immunity protein (113 aa).

Functionally, this protein is able to protect a cell, which harbors the plasmid ColE1 encoding colicin E1, against colicin E1. This Escherichia coli protein is Colicin-E1 immunity protein (imm).